Here is a 554-residue protein sequence, read N- to C-terminus: Glutamine--tRNA ligase (554 aa).

Positions 34-44 (PEPNGYLHIGH) match the 'HIGH' region motif. ATP-binding positions include 35 to 37 (EPN) and 41 to 47 (HIGHAKS). Positions 67 and 212 each coordinate L-glutamine. ATP contacts are provided by residues Thr231, 261-262 (RL), and 269-271 (MSK). The 'KMSKS' region signature appears at 268–272 (VMSKR). The tract at residues 317-324 (TKQDNTIE) is interaction with tRNA.

This sequence belongs to the class-I aminoacyl-tRNA synthetase family. In terms of assembly, monomer.

The protein resides in the cytoplasm. It catalyses the reaction tRNA(Gln) + L-glutamine + ATP = L-glutaminyl-tRNA(Gln) + AMP + diphosphate. In Shigella boydii serotype 18 (strain CDC 3083-94 / BS512), this protein is Glutamine--tRNA ligase.